The primary structure comprises 103 residues: NADH-quinone oxidoreductase subunit K (103 aa).

The next 3 helical transmembrane spans lie at 5 to 25 (ISSY…GALT), 30 to 50 (VVVL…LVAF), and 66 to 86 (LFTM…LIAL).

This sequence belongs to the complex I subunit 4L family. In terms of assembly, NDH-1 is composed of 14 different subunits. Subunits NuoA, H, J, K, L, M, N constitute the membrane sector of the complex.

Its subcellular location is the cell membrane. It carries out the reaction a quinone + NADH + 5 H(+)(in) = a quinol + NAD(+) + 4 H(+)(out). Its function is as follows. NDH-1 shuttles electrons from NADH, via FMN and iron-sulfur (Fe-S) centers, to quinones in the respiratory chain. The immediate electron acceptor for the enzyme in this species is believed to be a menaquinone. Couples the redox reaction to proton translocation (for every two electrons transferred, four hydrogen ions are translocated across the cytoplasmic membrane), and thus conserves the redox energy in a proton gradient. The polypeptide is NADH-quinone oxidoreductase subunit K (Brevibacillus brevis (strain 47 / JCM 6285 / NBRC 100599)).